Reading from the N-terminus, the 94-residue chain is Protein S100-A1 (94 aa).

EF-hand domains are found at residues 13–48 and 50–85; these read INVF…FLDA and KDVD…LTVA. 7 residues coordinate Ca(2+): Lys28, Glu33, Asp63, Asn65, Asp67, Glu69, and Glu74. At Cys86 the chain carries S-nitrosocysteine.

It belongs to the S-100 family. In terms of assembly, dimer of either two alpha chains, or two beta chains, or one alpha and one beta chain. Also forms heterodimers with S100P. Interacts with AGER. Interacts with CAPZA1. Interacts with FKBP4. Interacts with RYR1 and RYR2. Interacts with CACYBP in a calcium-dependent manner. Interacts with PPP5C (via TPR repeats); the interaction is calcium-dependent and modulates PPP5C activity. Interacts with ATP2A2 and PLN in a Ca(2+)-dependent manner. Interacts with mitochondrial F1-ATPase subunits ATP5F1A and ATP5F1B; these interactions increase F1-ATPase activity. Glutathionylated; glutathionylation increases affinity to calcium about 10-fold. As to expression, highly prevalent in heart. Also found in lesser quantities in skeletal muscle and brain.

Its subcellular location is the cytoplasm. The protein localises to the sarcoplasmic reticulum. It is found in the mitochondrion. Its function is as follows. Small calcium binding protein that plays important roles in several biological processes such as Ca(2+) homeostasis, chondrocyte biology and cardiomyocyte regulation. In response to an increase in intracellular Ca(2+) levels, binds calcium which triggers conformational changes. These changes allow interactions with specific target proteins and modulate their activity. Regulates a network in cardiomyocytes controlling sarcoplasmic reticulum Ca(2+) cycling and mitochondrial function through interaction with the ryanodine receptors RYR1 and RYR2, sarcoplasmic reticulum Ca(2+)-ATPase/ATP2A2 and mitochondrial F1-ATPase. Facilitates diastolic Ca(2+) dissociation and myofilament mechanics in order to improve relaxation during diastole. The sequence is that of Protein S100-A1 (S100A1) from Homo sapiens (Human).